The following is a 535-amino-acid chain: CTP synthase (535 aa).

The segment at 1-267 is amidoligase domain; sequence MTKFIFVTGG…DDIVIKKLGL (267 aa). Residue Ser-13 coordinates CTP. Ser-13 serves as a coordination point for UTP. 14–19 is an ATP binding site; that stretch reads SLGKGI. Residue Tyr-54 participates in L-glutamine binding. ATP is bound at residue Asp-71. The Mg(2+) site is built by Asp-71 and Glu-141. CTP-binding positions include 148–150, 188–193, and Lys-224; these read DIE and KTKPTQ. UTP is bound by residues 188-193 and Lys-224; that span reads KTKPTQ. The 243-residue stretch at 292 to 534 folds into the Glutamine amidotransferase type-1 domain; it reads TIGIVGKYVS…IGASLKTNKL (243 aa). Residue Gly-354 coordinates L-glutamine. Cys-381 functions as the Nucleophile; for glutamine hydrolysis in the catalytic mechanism. L-glutamine is bound by residues 382–385, Glu-405, and Arg-462; that span reads LGMQ. Active-site residues include His-507 and Glu-509.

It belongs to the CTP synthase family. Homotetramer.

The catalysed reaction is UTP + L-glutamine + ATP + H2O = CTP + L-glutamate + ADP + phosphate + 2 H(+). The enzyme catalyses L-glutamine + H2O = L-glutamate + NH4(+). It carries out the reaction UTP + NH4(+) + ATP = CTP + ADP + phosphate + 2 H(+). It functions in the pathway pyrimidine metabolism; CTP biosynthesis via de novo pathway; CTP from UDP: step 2/2. With respect to regulation, allosterically activated by GTP, when glutamine is the substrate; GTP has no effect on the reaction when ammonia is the substrate. The allosteric effector GTP functions by stabilizing the protein conformation that binds the tetrahedral intermediate(s) formed during glutamine hydrolysis. Inhibited by the product CTP, via allosteric rather than competitive inhibition. Catalyzes the ATP-dependent amination of UTP to CTP with either L-glutamine or ammonia as the source of nitrogen. Regulates intracellular CTP levels through interactions with the four ribonucleotide triphosphates. This chain is CTP synthase, found in Carboxydothermus hydrogenoformans (strain ATCC BAA-161 / DSM 6008 / Z-2901).